A 303-amino-acid polypeptide reads, in one-letter code: Recombination-associated protein RdgC (303 aa).

The protein belongs to the RdgC family.

Its subcellular location is the cytoplasm. It is found in the nucleoid. Functionally, may be involved in recombination. This Salmonella newport (strain SL254) protein is Recombination-associated protein RdgC.